Here is a 606-residue protein sequence, read N- to C-terminus: DNA mismatch repair protein MutL (606 aa).

The tract at residues 377–401 is disordered; the sequence is HRPLFAPQPAPQPDREPPLPDSGSR.

The protein belongs to the DNA mismatch repair MutL/HexB family.

In terms of biological role, this protein is involved in the repair of mismatches in DNA. It is required for dam-dependent methyl-directed DNA mismatch repair. May act as a 'molecular matchmaker', a protein that promotes the formation of a stable complex between two or more DNA-binding proteins in an ATP-dependent manner without itself being part of a final effector complex. The protein is DNA mismatch repair protein MutL of Geobacter sulfurreducens (strain ATCC 51573 / DSM 12127 / PCA).